We begin with the raw amino-acid sequence, 351 residues long: Hepatocyte nuclear factor 3-gamma (351 aa).

Residues 52–73 (PGGLPASPLPTGPLAPPAPTAP) show a composition bias toward pro residues. Residues 52-94 (PGGLPASPLPTGPLAPPAPTAPLGPTFPGLGASTGGGSSSGYG) are disordered. Gly residues predominate over residues 83 to 94 (ASTGGGSSSGYG). A DNA-binding region (fork-head) is located at residues 118–212 (KPPYSYISLI…ENGCYLRRQK (95 aa)). A disordered region spans residues 218–275 (EKVKKGGGGSSASRNSAGSASTATAPAATVASTPQPQPPPPEPEAQGGDEVGALDCGS). Positions 228–251 (SASRNSAGSASTATAPAATVASTP) are enriched in low complexity.

It is found in the nucleus. Its function is as follows. Transcription activator for a number of liver genes such as AFP, albumin, tyrosine aminotransferase, PEPCK, etc. Interacts with the cis-acting regulatory regions of these genes. This is Hepatocyte nuclear factor 3-gamma (FOXA3) from Bos taurus (Bovine).